Reading from the N-terminus, the 538-residue chain is Eukaryotic translation initiation factor 3 subunit L (538 aa).

The PCI domain occupies 305–513 (TFSDILLYIQ…IHIADTKVSH (209 aa)).

It belongs to the eIF-3 subunit L family. Component of the eukaryotic translation initiation factor 3 (eIF-3) complex. The eIF-3 complex interacts with pix.

The protein localises to the cytoplasm. Component of the eukaryotic translation initiation factor 3 (eIF-3) complex, which is involved in protein synthesis of a specialized repertoire of mRNAs and, together with other initiation factors, stimulates binding of mRNA and methionyl-tRNAi to the 40S ribosome. The eIF-3 complex specifically targets and initiates translation of a subset of mRNAs involved in cell proliferation. The polypeptide is Eukaryotic translation initiation factor 3 subunit L (Drosophila mojavensis (Fruit fly)).